We begin with the raw amino-acid sequence, 422 residues long: Enolase (422 aa).

A (2R)-2-phosphoglycerate-binding site is contributed by Gln-161. Catalysis depends on Glu-203, which acts as the Proton donor. Residues Asp-240, Glu-283, and Asp-310 each contribute to the Mg(2+) site. Residues Lys-335, Arg-364, Ser-365, and Lys-386 each coordinate (2R)-2-phosphoglycerate. The active-site Proton acceptor is Lys-335.

It belongs to the enolase family. Mg(2+) is required as a cofactor.

Its subcellular location is the cytoplasm. It is found in the secreted. It localises to the cell surface. The catalysed reaction is (2R)-2-phosphoglycerate = phosphoenolpyruvate + H2O. Its pathway is carbohydrate degradation; glycolysis; pyruvate from D-glyceraldehyde 3-phosphate: step 4/5. Functionally, catalyzes the reversible conversion of 2-phosphoglycerate (2-PG) into phosphoenolpyruvate (PEP). It is essential for the degradation of carbohydrates via glycolysis. This is Enolase from Deinococcus geothermalis (strain DSM 11300 / CIP 105573 / AG-3a).